We begin with the raw amino-acid sequence, 258 residues long: Indole-3-glycerol phosphate synthase (258 aa).

This sequence belongs to the TrpC family.

The catalysed reaction is 1-(2-carboxyphenylamino)-1-deoxy-D-ribulose 5-phosphate + H(+) = (1S,2R)-1-C-(indol-3-yl)glycerol 3-phosphate + CO2 + H2O. Its pathway is amino-acid biosynthesis; L-tryptophan biosynthesis; L-tryptophan from chorismate: step 4/5. The polypeptide is Indole-3-glycerol phosphate synthase (Chlorobium phaeobacteroides (strain DSM 266 / SMG 266 / 2430)).